The chain runs to 130 residues: Small ribosomal subunit protein uS8 (130 aa).

Belongs to the universal ribosomal protein uS8 family. As to quaternary structure, part of the 30S ribosomal subunit. Contacts proteins S5 and S12.

Functionally, one of the primary rRNA binding proteins, it binds directly to 16S rRNA central domain where it helps coordinate assembly of the platform of the 30S subunit. The protein is Small ribosomal subunit protein uS8 of Cereibacter sphaeroides (strain KD131 / KCTC 12085) (Rhodobacter sphaeroides).